The following is a 295-amino-acid chain: 4-hydroxy-tetrahydrodipicolinate synthase 1 (295 aa).

Thr46 is a binding site for pyruvate. The active-site Proton donor/acceptor is Tyr134. Lys162 functions as the Schiff-base intermediate with substrate in the catalytic mechanism. Val204 serves as a coordination point for pyruvate.

Belongs to the DapA family. Homotetramer; dimer of dimers.

It localises to the cytoplasm. The enzyme catalyses L-aspartate 4-semialdehyde + pyruvate = (2S,4S)-4-hydroxy-2,3,4,5-tetrahydrodipicolinate + H2O + H(+). It participates in amino-acid biosynthesis; L-lysine biosynthesis via DAP pathway; (S)-tetrahydrodipicolinate from L-aspartate: step 3/4. Its function is as follows. Catalyzes the condensation of (S)-aspartate-beta-semialdehyde [(S)-ASA] and pyruvate to 4-hydroxy-tetrahydrodipicolinate (HTPA). The protein is 4-hydroxy-tetrahydrodipicolinate synthase 1 of Halalkalibacterium halodurans (strain ATCC BAA-125 / DSM 18197 / FERM 7344 / JCM 9153 / C-125) (Bacillus halodurans).